The primary structure comprises 153 residues: UPF0540 protein At1g62220 (153 aa).

Residues 1-21 form the signal peptide; sequence MNATKFVVLLVISVLCAIVTA. Disordered regions lie at residues 63–82 and 122–153; these read SSATGFNNPKGPDANAYENG and ARANGKVASASRVKGSSEKKKGKGKKGKGKKD. The span at 122-132 shows a compositional bias: low complexity; sequence ARANGKVASAS. A compositionally biased stretch (basic residues) spans 141–153; sequence KKGKGKKGKGKKD.

It belongs to the UPF0540 family.

The polypeptide is UPF0540 protein At1g62220 (Arabidopsis thaliana (Mouse-ear cress)).